The chain runs to 383 residues: Putative type I specificity subunit S.MgeORF438P (383 aa).

The TRD1 stretch occupies residues 1–142; that stretch reads MTPKLKLNNN…KELEIPFTSN (142 aa). The tract at residues 143–182 is conserved region 1; the sequence is KNEQHAIANTLSVFDERLENLASLIEINRKLRDEYAHKLF. Residues 143 to 182 adopt a coiled-coil conformation; sequence KNEQHAIANTLSVFDERLENLASLIEINRKLRDEYAHKLF. The segment at 183–330 is TRD2; the sequence is SLDEAFLSHW…GEIKVPYVKS (148 aa). The segment at 331-370 is conserved region 2; it reads FQLQRKAGKIVFLLDQKLDQYKKELSSLTVIRDTLLKKLF. Residues 331–370 adopt a coiled-coil conformation; the sequence is FQLQRKAGKIVFLLDQKLDQYKKELSSLTVIRDTLLKKLF.

It belongs to the type-I restriction system S methylase family.

In terms of biological role, the specificity (S) subunit of a type I restriction enzyme; this subunit dictates DNA sequence specificity. This bacterium does not encode the associated endonuclease or methylase subunits. The sequence is that of Putative type I specificity subunit S.MgeORF438P from Mycoplasma genitalium (strain ATCC 33530 / DSM 19775 / NCTC 10195 / G37) (Mycoplasmoides genitalium).